The primary structure comprises 72 residues: METEALLNEKISVQQARQEFANYANNIPEPMMVSVAPPKANPSVSSKTKQQQHFKPGKATKDKATTKCCTIS.

Residues Met32–Ser72 form a disordered region. A lipid anchor (S-palmitoyl cysteine) is attached at Cys68. Residue Cys69 is modified to Cysteine methyl ester. A lipid anchor (S-farnesyl cysteine) is attached at Cys69. Residues Thr70–Ser72 constitute a propeptide, removed in mature form.

This sequence belongs to the G protein gamma family. As to quaternary structure, g proteins are composed of 3 units, alpha, beta and gamma. Binding of the beta-gamma subunit complex (git5-git11) to the alpha subunit (gpa2) facilitates interaction with GPCR git3.

Its subcellular location is the cell membrane. Its function is as follows. Gamma subunit of the heterotrimeric guanine nucleotide-binding protein (G protein) involved in glucose-induced cAMP signaling. The beta-gamma subunits (git5-git11) promote binding of the alpha subunit gpa2 to GPCR git3, which senses extracellular glucose, to activate cAMP-PKA signaling and repress sexual development and gluconeogenesis. The chain is Guanine nucleotide-binding protein subunit gamma (git11) from Schizosaccharomyces pombe (strain 972 / ATCC 24843) (Fission yeast).